A 245-amino-acid polypeptide reads, in one-letter code: Lactate utilization protein A (245 aa).

Belongs to the LutA/YkgE family.

In terms of biological role, is involved in L-lactate degradation and allows cells to grow with lactate as the sole carbon source. In Macrococcus caseolyticus (strain JCSC5402) (Macrococcoides caseolyticum), this protein is Lactate utilization protein A.